The chain runs to 169 residues: MASQSSKPQSIYDFTVKDAKGNDVDLSIYKGKVLIIVNVASQCGLTNSNYTDLTEIYKKYKDQGLEILAFPCNQFGGQEPGSIEEIQNMVCTRFKAEYPIFDKVDVNGDNAAPLYKFLKSSKGGFFGDSIKWNFSKFLVDKEGNVVDRYSPTTTPASMEKDIKKLLGVA.

Residue C43 is part of the active site.

The protein belongs to the glutathione peroxidase family. In terms of tissue distribution, germinating seed, apex, flower, as well as in stressed tissues.

It localises to the cytoplasm. The catalysed reaction is a hydroperoxy polyunsaturated fatty acid + 2 glutathione = a hydroxy polyunsaturated fatty acid + glutathione disulfide + H2O. Functionally, protects cells and enzymes from oxidative damage, by catalyzing the reduction of hydrogen peroxide, lipid peroxides and organic hydroperoxide, by glutathione. This is Probable phospholipid hydroperoxide glutathione peroxidase from Nicotiana sylvestris (Wood tobacco).